The following is a 504-amino-acid chain: Dihydrolipoamide dehydrogenase (504 aa).

A mitochondrion-targeting transit peptide spans 1–34; it reads MLSQRLIGRTAVKSAFRPSGLPTVVNASRWRRGY. Residues 69–78, lysine 87, glycine 151, and 180–182 contribute to the FAD site; these read EKRGTLGGTC and TGS. Residues cysteine 78 and cysteine 83 are joined by a disulfide bond. Residues 217–224, glutamate 240, valine 275, and glycine 310 contribute to the NAD(+) site; that span reads GGGIIGLE. Residues aspartate 351 and 357 to 360 contribute to the FAD site; that span reads MLAH. The active-site Proton acceptor is histidine 483.

This sequence belongs to the class-I pyridine nucleotide-disulfide oxidoreductase family. Eukaryotic pyruvate dehydrogenase (PDH) complexes are organized as a core consisting of the oligomeric dihydrolipoamide acetyl-transferase (E2), around which are arranged multiple copies of pyruvate dehydrogenase (E1), dihydrolipoamide dehydrogenase (E3) and protein X (E3BP) bound by non-covalent bonds. The Chaetomium thermophilum PDH complex contains 60 E2 units, 12 E3BP units, about 20 E1 units, and 12 or more E3 units. The units are organized in 1 E2 60-mer, 4 E3BP trimers, about 20 E1 tetramers, and a maximum of 12 E3 dimers. The E3BP trimers are bound inside the icosahedral core with tetrahedral symmetry. The cofactor is FAD.

Its subcellular location is the mitochondrion. The catalysed reaction is N(6)-[(R)-dihydrolipoyl]-L-lysyl-[protein] + NAD(+) = N(6)-[(R)-lipoyl]-L-lysyl-[protein] + NADH + H(+). In terms of biological role, lipoamide dehydrogenase is a component of the alpha-ketoacid dehydrogenase complexes. This includes the pyruvate dehydrogenase complex, which catalyzes the overall conversion of pyruvate to acetyl-CoA and CO(2). Also acts as a component of the glycine cleavage system (glycine decarboxylase complex), which catalyzes the degradation of glycine. The 10-megadalton pyruvate dehydrogenase complex contains multiple copies of three enzymatic components: pyruvate dehydrogenase (E1), dihydrolipoamide acetyltransferase (E2) and lipoamide dehydrogenase (E3) and catalyzes the overall oxidative decarboxylation of pyruvate to form acetyl-CoA and CO(2). Within the complex, pyruvate and thiamine pyrophosphate (TPP or vitamin B1) are bound by pyruvate dehydrogenase E1 subunits alpha and beta and pyruvate is decarboxylated leading to the 2-carbon hydrohyethyl bound to TPP. The E2 component contains covalently-bound lipoyl cofactors and transfers the hydroxyethyl group from TPP to an oxidized form of covalently bound lipoamide, and the resulting acetyl group is then transferred to free coenzyme A to form acetyl-CoA and reduced dihydrolipoamide-E2. Finally, the flavoprotein dihydrolipoamide dehydrogenase (E3) re-oxidizes the lipoyl group of dihydrolipoamide-E2 to form lipoamide-E2 and NADH. A fourth subunit, E3BP, is responsible for tethering E3 in proximity to the core, forming the entire metabolon. The protein is Dihydrolipoamide dehydrogenase of Chaetomium thermophilum (strain DSM 1495 / CBS 144.50 / IMI 039719) (Thermochaetoides thermophila).